Consider the following 177-residue polypeptide: Ribonuclease clavin (177 aa).

Residues 1–27 (MVAIKNLVLVALTAVTALAMPSPLEER) form the signal peptide. 2 cysteine pairs are disulfide-bonded: C33–C175 and C103–C159. H77 is an active-site residue. The disordered stretch occupies residues 98-117 (WGNSDCDRPPKHSKNGDGKN). Basic and acidic residues predominate over residues 102-117 (DCDRPPKHSKNGDGKN). Residue E123 is the Proton acceptor of the active site. H164 acts as the Proton donor in catalysis.

It belongs to the ribonuclease U2 family.

The protein resides in the secreted. In terms of biological role, clavin has the same substrate specificity as alpha-sarcin. It is specific for purines in both single- and double-stranded RNA. Its toxic action on eukaryotic cells is the result of cleavage of a single phosphodiester bond in the 60S subunit of ribosomes. The sequence is that of Ribonuclease clavin (cla) from Aspergillus clavatus (strain ATCC 1007 / CBS 513.65 / DSM 816 / NCTC 3887 / NRRL 1 / QM 1276 / 107).